Here is a 206-residue protein sequence, read N- to C-terminus: MELKVIDAKGQVSGSLSVSDALFAREYNEALVHQLVNAYLANARSGNRAQKTRAEVKHSTKKPWRQKGTGRARSGMTSSPLWRKGGRAFPNKPDENFTQKVNRKMYRAGMATILSQLTRDERLFAIEALTAETPKTKVFAEQVKNLGLEQVLFVTKQLDENVYLASRNLPNVLVLEAQQVDPYSLLRYKKVIITKDAVAQLEEQWV.

Residues 46 to 95 form a disordered region; sequence GNRAQKTRAEVKHSTKKPWRQKGTGRARSGMTSSPLWRKGGRAFPNKPDE. Residues 59-70 show a composition bias toward basic residues; it reads STKKPWRQKGTG.

Belongs to the universal ribosomal protein uL4 family. In terms of assembly, part of the 50S ribosomal subunit.

Its function is as follows. One of the primary rRNA binding proteins, this protein initially binds near the 5'-end of the 23S rRNA. It is important during the early stages of 50S assembly. It makes multiple contacts with different domains of the 23S rRNA in the assembled 50S subunit and ribosome. In terms of biological role, forms part of the polypeptide exit tunnel. In Neisseria meningitidis serogroup C (strain 053442), this protein is Large ribosomal subunit protein uL4.